Here is a 330-residue protein sequence, read N- to C-terminus: Beta-ketoacyl-[acyl-carrier-protein] synthase III (330 aa).

Active-site residues include cysteine 115 and histidine 255. An ACP-binding region spans residues 256–260 (QANVR). Residue asparagine 285 is part of the active site.

This sequence belongs to the thiolase-like superfamily. FabH family. As to quaternary structure, homodimer.

Its subcellular location is the cytoplasm. It catalyses the reaction malonyl-[ACP] + acetyl-CoA + H(+) = 3-oxobutanoyl-[ACP] + CO2 + CoA. It participates in lipid metabolism; fatty acid biosynthesis. Its function is as follows. Catalyzes the condensation reaction of fatty acid synthesis by the addition to an acyl acceptor of two carbons from malonyl-ACP. Catalyzes the first condensation reaction which initiates fatty acid synthesis and may therefore play a role in governing the total rate of fatty acid production. Possesses both acetoacetyl-ACP synthase and acetyl transacylase activities. Its substrate specificity determines the biosynthesis of branched-chain and/or straight-chain of fatty acids. The protein is Beta-ketoacyl-[acyl-carrier-protein] synthase III of Symbiobacterium thermophilum (strain DSM 24528 / JCM 14929 / IAM 14863 / T).